The sequence spans 1099 residues: Zinc finger protein basonuclin-2 (1099 aa).

A disordered region spans residues 45-66; that stretch reads EEAEVDVRERETQRDREPKRAR. Residues 49–66 are compositionally biased toward basic and acidic residues; the sequence is VDVRERETQRDREPKRAR. Residue lysine 277 forms a Glycyl lysine isopeptide (Lys-Gly) (interchain with G-Cter in SUMO2) linkage. Residues 357–385 form a disordered region; sequence LSTQNEYNESSESEVSPTPYKNDQTPNRN. The segment covering 361–372 has biased composition (low complexity); the sequence is NEYNESSESEVS. Polar residues predominate over residues 375-385; sequence PYKNDQTPNRN. Glycyl lysine isopeptide (Lys-Gly) (interchain with G-Cter in SUMO2) cross-links involve residues lysine 396, lysine 416, and lysine 421. Residues 397 to 423 form a disordered region; sequence TEPACVSPIQNSAPVSDLTKTEHPKSS. The segment at 441–464 adopts a C2H2-type 1 zinc-finger fold; the sequence is VFCNACGKTFYDKGTLKIHYNAVH. Serine 561 carries the phosphoserine modification. 2 disordered regions span residues 622 to 641 and 648 to 742; these read EPSA…MPVK and DTAD…EGDE. Lysine 641 participates in a covalent cross-link: Glycyl lysine isopeptide (Lys-Gly) (interchain with G-Cter in SUMO2). A compositionally biased stretch (acidic residues) spans 648–661; that stretch reads DTADEFDDEDDDPN. Basic and acidic residues-rich tracts occupy residues 670–680 and 719–742; these read MSHDNHCHSQE and ERDY…EGDE. The segment at 833–856 adopts a C2H2-type 2 zinc-finger fold; it reads KICYVCKKSFKSSYSVKLHYRNVH. Residues lysine 894 and lysine 919 each participate in a glycyl lysine isopeptide (Lys-Gly) (interchain with G-Cter in SUMO2) cross-link. 2 disordered regions span residues 929–948 and 968–1008; these read LDVR…HLNG and LQSS…KAEA. Acidic residues predominate over residues 982-995; the sequence is AGSDEGILLDDIDG. C2H2-type zinc fingers lie at residues 1035 to 1058 and 1063 to 1090; these read IMCN…KTVH and HKCK…PNLH. Positions 1079 to 1099 are disordered; sequence SRNRHSQNPNLHKNIPFTSVD.

Highly expressed in testis, uterus and small intestine, and weakly expressed in colon and prostate. Also expressed in skin, primary keratinocytes, immortalized keratinocytes, and HeLa and HEK293 cells. Not detected in blood, thymus, spleen or Hep-G2 cells.

It localises to the nucleus. Its function is as follows. Probable transcription factor specific for skin keratinocytes. May play a role in the differentiation of spermatozoa and oocytes. May also play an important role in early urinary-tract development. The chain is Zinc finger protein basonuclin-2 from Homo sapiens (Human).